Reading from the N-terminus, the 134-residue chain is Isocitrate dehydrogenase [NAD] subunit alpha, mitochondrial (134 aa).

Residue Lys37 is modified to N6-succinyllysine. At Thr50 the chain carries Phosphothreonine. Substrate is bound by residues Arg64, Arg74, and Arg95.

Belongs to the isocitrate and isopropylmalate dehydrogenases family. Heterooligomer of subunits alpha (IDH3A), beta (IDH3B), and gamma (IDH3G) in the apparent ratio of 2:1:1. The heterodimer containing one IDH3A and one IDH3B subunit and the heterodimer containing one IDH3A and one IDH3G subunit assemble into a heterotetramer (which contains two subunits of IDH3A, one of IDH3B and one of IDH3G) and further into the heterooctamer. Mg(2+) serves as cofactor. Requires Mn(2+) as cofactor.

It localises to the mitochondrion. It catalyses the reaction D-threo-isocitrate + NAD(+) = 2-oxoglutarate + CO2 + NADH. With respect to regulation, the heterotetramer and the heterodimer composed of IDH3A and IDH3G subunits can be allosterically activated by citrate (CIT) or/and ADP, and the two activators can act independently or synergistically. The heterodimer composed of IDH3A and IDH3B subunits cannot be allosterically regulated and the allosteric regulation of the heterotetramer is through the IDH3G subunit and not the IDH3B subunit. The IDH3G subunit contains the allosteric site which consists of a CIT-binding site and an ADP-binding site, and the binding of CIT and ADP causes conformational changes at the allosteric site which are transmitted to the active site in the catalytic subunit (IDH3A) through a cascade of conformational changes at the heterodimer interface, leading to stabilization of the isocitrate-binding at the active site and thus activation of the enzyme. ATP can activate the heterotetramer and the heterodimer composed of IDH3A and IDH3G subunits at low concentrations but inhibits their activities at high concentrations, whereas ATP exhibits only inhibitory effect on the heterodimer composed of IDH3A and IDH3B subunits. Its function is as follows. Catalytic subunit of the enzyme which catalyzes the decarboxylation of isocitrate (ICT) into alpha-ketoglutarate. The heterodimer composed of the alpha (IDH3A) and beta (IDH3B) subunits and the heterodimer composed of the alpha (IDH3A) and gamma (IDH3G) subunits, have considerable basal activity but the full activity of the heterotetramer (containing two subunits of IDH3A, one of IDH3B and one of IDH3G) requires the assembly and cooperative function of both heterodimers. In Mesocricetus auratus (Golden hamster), this protein is Isocitrate dehydrogenase [NAD] subunit alpha, mitochondrial.